The primary structure comprises 403 residues: GDSL esterase/lipase At1g28590 (403 aa).

A signal peptide spans 1 to 27; that stretch reads MASLDSLPAMKLVRFILSTLLVTSVNS. Ser43 (nucleophile) is an active-site residue. N-linked (GlcNAc...) asparagine glycans are attached at residues Asn139 and Asn323. Residues Asp346 and His349 contribute to the active site.

It belongs to the 'GDSL' lipolytic enzyme family.

It localises to the secreted. The protein is GDSL esterase/lipase At1g28590 of Arabidopsis thaliana (Mouse-ear cress).